A 189-amino-acid chain; its full sequence is Crossover junction endodeoxyribonuclease RuvC (189 aa).

Catalysis depends on residues Asp11, Glu71, and Asp143. Mg(2+) contacts are provided by Asp11, Glu71, and Asp143.

The protein belongs to the RuvC family. Homodimer which binds Holliday junction (HJ) DNA. The HJ becomes 2-fold symmetrical on binding to RuvC with unstacked arms; it has a different conformation from HJ DNA in complex with RuvA. In the full resolvosome a probable DNA-RuvA(4)-RuvB(12)-RuvC(2) complex forms which resolves the HJ. The cofactor is Mg(2+).

Its subcellular location is the cytoplasm. The enzyme catalyses Endonucleolytic cleavage at a junction such as a reciprocal single-stranded crossover between two homologous DNA duplexes (Holliday junction).. Functionally, the RuvA-RuvB-RuvC complex processes Holliday junction (HJ) DNA during genetic recombination and DNA repair. Endonuclease that resolves HJ intermediates. Cleaves cruciform DNA by making single-stranded nicks across the HJ at symmetrical positions within the homologous arms, yielding a 5'-phosphate and a 3'-hydroxyl group; requires a central core of homology in the junction. The consensus cleavage sequence is 5'-(A/T)TT(C/G)-3'. Cleavage occurs on the 3'-side of the TT dinucleotide at the point of strand exchange. HJ branch migration catalyzed by RuvA-RuvB allows RuvC to scan DNA until it finds its consensus sequence, where it cleaves and resolves the cruciform DNA. This Methylorubrum extorquens (strain CM4 / NCIMB 13688) (Methylobacterium extorquens) protein is Crossover junction endodeoxyribonuclease RuvC.